The sequence spans 283 residues: Calpastatin (283 aa).

The span at 1–15 (MNPTETKAIPVSQQM) shows a compositional bias: polar residues. Disordered regions lie at residues 1–186 (MNPT…SDPM) and 212–283 (NEGI…KVEK). Basic residues predominate over residues 21–30 (PNKKKHKKQA). Lys32 participates in a covalent cross-link: Glycyl lysine isopeptide (Lys-Gly) (interchain with G-Cter in SUMO2). Residues 46–65 (VVHEKKSQEGKPKEHTEQKS) are compositionally biased toward basic and acidic residues. Residue Lys50 is modified to N6-acetyllysine. Ser87 carries the phosphoserine modification. Residues 107-122 (VSAGGESVAGVAATSG) are compositionally biased toward low complexity. At Ser133 the chain carries Phosphoserine. The residue at position 135 (Thr135) is a Phosphothreonine. The Inhibitory domain 1 repeat unit spans residues 170–222 (IEEENTTYTGPEVSDPMSSTYIEELGKREVTIPPKYRELLAKNEGITGPPADS). Phosphoserine is present on residues Ser222 and Ser243. Over residues 249 to 258 (KKTEKEESTE) the composition is skewed to basic and acidic residues.

It belongs to the protease inhibitor I27 (calpastatin) family.

Specific inhibition of calpain (calcium-dependent cysteine protease). Plays a key role in postmortem tenderization of meat and have been proposed to be involved in muscle protein degradation in living tissue. The sequence is that of Calpastatin (CAST) from Chlorocebus aethiops (Green monkey).